A 452-amino-acid polypeptide reads, in one-letter code: NADH-quinone oxidoreductase subunit H (452 aa).

9 helical membrane passes run 28–48 (IILI…LMMI), 96–116 (VIYI…FSVI), 136–156 (LPVA…GIVL), 177–197 (VISY…YAGT), 210–230 (IWFA…MIGE), 264–286 (AEYV…GYLA), 301–321 (WWPA…FVWV), 335–355 (KLGW…VAVI), and 366–386 (YVTA…LWAW).

The protein belongs to the complex I subunit 1 family. As to quaternary structure, NDH-1 is composed of 14 different subunits. Subunits NuoA, H, J, K, L, M, N constitute the membrane sector of the complex.

It is found in the cell membrane. It catalyses the reaction a quinone + NADH + 5 H(+)(in) = a quinol + NAD(+) + 4 H(+)(out). Its function is as follows. NDH-1 shuttles electrons from NADH, via FMN and iron-sulfur (Fe-S) centers, to quinones in the respiratory chain. The immediate electron acceptor for the enzyme in this species is believed to be ubiquinone. Couples the redox reaction to proton translocation (for every two electrons transferred, four hydrogen ions are translocated across the cytoplasmic membrane), and thus conserves the redox energy in a proton gradient. This subunit may bind ubiquinone. This Thermobifida fusca (strain YX) protein is NADH-quinone oxidoreductase subunit H.